Consider the following 306-residue polypeptide: Brix domain-containing protein C4F8.04 (306 aa).

The tract at residues 16–49 (KALHQKNKDKLERRKERAKEEEKDPEKKRLRLSE) is disordered. Residues 21–42 (KNKDKLERRKERAKEEEKDPEK) are compositionally biased toward basic and acidic residues. Positions 94–283 (PKLLVTTSKR…LRMVQKGVWD (190 aa)) constitute a Brix domain.

The polypeptide is Brix domain-containing protein C4F8.04 (Schizosaccharomyces pombe (strain 972 / ATCC 24843) (Fission yeast)).